The following is a 462-amino-acid chain: Chitinase-like mite allergen Der f 18.0101 (462 aa).

The first 25 residues, 1-25, serve as a signal peptide directing secretion; that stretch reads MTRFSLTVLAVLAACFGSNIRPNVA. Residues 29 to 378 form the GH18 domain; it reads PKTVCYYESW…HAIQSNYYHG (350 aa). C33 and C58 are joined by a disulfide. An N-linked (GlcNAc...) asparagine glycan is attached at N338. Positions 404 to 462 constitute a Chitin-binding type-2 domain; sequence VFHCHEEGFFRDKTYCATYYECKKGDFGLEKTVHHCANHLQAFDEVSRTCIDHTKIPGC. A disulfide bridge links C439 with C453.

The protein belongs to the glycosyl hydrolase 18 family. Chitinase class II subfamily. In terms of tissue distribution, expressed in the upper digestive tract. Staining is observed in the ventriculus, and in very rare individuals, also in the intestine or esophagus. No expression in fecal pellets neither inside the rectum nor defecated outside of the body.

The protein localises to the secreted. Its function is as follows. Probably a non-catalytic chitinase-like protein, which binds to insoluble chitin and enhances the activity of the catalytic chitinases. Has weak chitin-binding activity. The chain is Chitinase-like mite allergen Der f 18.0101 from Dermatophagoides farinae (American house dust mite).